The primary structure comprises 237 residues: Necrosis-inducing protein NPP1 (237 aa).

The signal sequence occupies residues 1 to 19; it reads MNVLTFLIAAAVSLAVVQA. Residue Asn67 is glycosylated (N-linked (GlcNAc...) asparagine). The Conserved undecapeptide motif signature appears at 103-113; it reads AIMYSWYFPKD. Residues 120–126 carry the Conserved heptapetpide motif motif; that stretch reads GHRHDWE.

It belongs to the Necrosis inducing protein (NPP1) family.

It localises to the secreted. Its function is as follows. Secreted effector that acts as a pathogen-associated molecular pattern (PAMP) recognized by the plant immune system. Induces necrotic cell death and ethylene biosynthesis in parsley. Stimulates early induced host cellular responses implicated in elicitor signal transmission such as increased levels of cytoplasmic calcium, production of reactive oxygen species (ROS), and MAP kinase activation. Infiltration of NPP1 into leaves of Arabidopsis thaliana results in transcript accumulation of pathogenesis-related (PR) genes, production of ROS and ethylene, callose apposition, and hypersensitive response (HR)-like cell death. NPP1-mediated induction of the PR1 gene is salicylic acid-dependent, and requires both functional NDR1 and PAD4. The sequence is that of Necrosis-inducing protein NPP1 from Phytophthora nicotianae (Potato buckeye rot agent).